The sequence spans 494 residues: Aspartyl/glutamyl-tRNA(Asn/Gln) amidotransferase subunit B (494 aa).

Belongs to the GatB/GatE family. GatB subfamily. In terms of assembly, heterotrimer of A, B and C subunits.

It carries out the reaction L-glutamyl-tRNA(Gln) + L-glutamine + ATP + H2O = L-glutaminyl-tRNA(Gln) + L-glutamate + ADP + phosphate + H(+). The enzyme catalyses L-aspartyl-tRNA(Asn) + L-glutamine + ATP + H2O = L-asparaginyl-tRNA(Asn) + L-glutamate + ADP + phosphate + 2 H(+). In terms of biological role, allows the formation of correctly charged Asn-tRNA(Asn) or Gln-tRNA(Gln) through the transamidation of misacylated Asp-tRNA(Asn) or Glu-tRNA(Gln) in organisms which lack either or both of asparaginyl-tRNA or glutaminyl-tRNA synthetases. The reaction takes place in the presence of glutamine and ATP through an activated phospho-Asp-tRNA(Asn) or phospho-Glu-tRNA(Gln). The chain is Aspartyl/glutamyl-tRNA(Asn/Gln) amidotransferase subunit B from Trichodesmium erythraeum (strain IMS101).